Reading from the N-terminus, the 515-residue chain is Leucine-rich repeat transmembrane neuronal protein 2 (515 aa).

An N-terminal signal peptide occupies residues M1–A33. The LRRNT domain occupies C34–K61. Topologically, residues C34–R421 are extracellular. N57 is a glycosylation site (N-linked (GlcNAc...) asparagine). LRR repeat units lie at residues S63–S83, Q86–G107, K110–Q131, N134–G155, K158–D179, S182–G203, K206–R227, S230–T251, T254–T275, and N278–S299. N126 carries an N-linked (GlcNAc...) asparagine glycan. N243 carries N-linked (GlcNAc...) asparagine glycosylation. In terms of domain architecture, LRRCT spans N311–N362. N362 carries an N-linked (GlcNAc...) asparagine glycan. Residues V422 to I442 traverse the membrane as a helical segment. Topologically, residues S443–V515 are cytoplasmic. Residues E512 to V515 carry the Involved in DLG4-binding motif.

Belongs to the LRRTM family. Interacts with DLG4. Interacts with neurexin NRXN1; interaction is mediated by heparan sulfate glycan modification on neurexin. As to expression, expressed in neuronal tissues.

Its subcellular location is the cell membrane. The protein localises to the postsynaptic cell membrane. Functionally, involved in the development and maintenance of excitatory synapses in the vertebrate nervous system. Regulates surface expression of AMPA receptors and instructs the development of functional glutamate release sites. Acts as a ligand for the presynaptic receptors NRXN1-A and NRXN1-B. The chain is Leucine-rich repeat transmembrane neuronal protein 2 (Lrrtm2) from Mus musculus (Mouse).